The sequence spans 1032 residues: uncharacterized protein (1032 aa).

Disordered stretches follow at residues 54-80, 391-451, and 884-934; these read NNNN…NNNN, QLQI…QTHL, and INNE…SKVK. The span at 884-907 shows a compositional bias: low complexity; sequence INNENNNENNNNYNGNINSNNNNN.

This is an uncharacterized protein from Dictyostelium discoideum (Social amoeba).